A 208-amino-acid chain; its full sequence is Fibroblast growth factor 10 (208 aa).

An N-terminal signal peptide occupies residues 1-37 (MWKWILTHCASAFPHLPGCCCCCFLLLFLVSSVPVTC). 2 N-linked (GlcNAc...) asparagine glycosylation sites follow: N51 and N196.

The protein belongs to the heparin-binding growth factors family. Interacts with FGFR1 and FGFR2. Interacts with FGFBP1.

It localises to the secreted. Its function is as follows. Plays an important role in the regulation of embryonic development, cell proliferation and cell differentiation. Required for normal branching morphogenesis. May play a role in wound healing. This is Fibroblast growth factor 10 (FGF10) from Homo sapiens (Human).